Reading from the N-terminus, the 534-residue chain is Echilunin cytochrome P450 monooxygenase (534 aa).

A helical transmembrane segment spans residues 18 to 38; sequence VSPAALSWAVVAIYLGTFFWL. C441 contributes to the heme binding site.

It belongs to the cytochrome P450 family. The cofactor is heme.

It is found in the membrane. The enzyme catalyses preechinulin + reduced [NADPH--hemoprotein reductase] + O2 = neoechinulin A + oxidized [NADPH--hemoprotein reductase] + 2 H2O + H(+). Its pathway is secondary metabolite biosynthesis. The protein operates within alkaloid biosynthesis. In terms of biological role, cytochrome P450 monooxygenase; part of the gene cluster that mediates the biosynthesis of echinulin family alkaloid. The pathway begins with the biosynthesis of the cyclic dipeptide cyclo-L-Trp-L-Ala (cyclo-TA) by the NRPS echPS via condensation of L-alanine and L-tryptophan. The prenyltransferase echPT1 then catalyzes the first prenylation step, a reverse prenylation reaction at C2, to yield preechinulin. Preechinulin is the substrate of the cytochrome P450 monooxygenase echP450 that catalyzes the formation of the double bond between C10 and C11 to produce neoechulin A. The unique prenyltransferase echPT2 functions as a competitive enzyme with echP450 for preechinulin metabolization and uses preechinulin for effective regiospecific prenylations. Preechinulin is prenylated by echPT2 at C5 or C7. C7-prenylation leads to accumulation of tardioxopiperazine B without further modification by echPT2. In contrast, the C5-prenylated tardioxopiperazine A can be prenylated again by echPT2, predominantly at C7 to form echinulin or less frequently at C4 to give variecolorin L. EchPT2 also accepts neoechilunin A to produce varlecolorin G (prenylation at C5) or isoechinulin A (prenylation at C7). EchPT2 further converts isoechinulin A into dehydroechinulin. Moreover, a yet unidentified enzyme can also convert neoechilunin A into neoechilunin B by introducing a double bond between positions C14 and C17 and thus provides a further substrate to echPT2 for C5 and C7 prenylation. This chain is Echilunin cytochrome P450 monooxygenase, found in Aspergillus ruber (strain CBS 135680).